An 802-amino-acid chain; its full sequence is Leucine--tRNA ligase (802 aa).

Residues 40-51 (PYPSGAGLHVGH) carry the 'HIGH' region motif. The 'KMSKS' region motif lies at 576–580 (KMSKS). Lys-579 provides a ligand contact to ATP.

Belongs to the class-I aminoacyl-tRNA synthetase family.

Its subcellular location is the cytoplasm. It catalyses the reaction tRNA(Leu) + L-leucine + ATP = L-leucyl-tRNA(Leu) + AMP + diphosphate. The chain is Leucine--tRNA ligase from Bacillus cereus (strain ATCC 10987 / NRS 248).